The chain runs to 338 residues: Sulfotransferase 2B1 (338 aa).

Residue 67–72 participates in 3'-phosphoadenylyl sulfate binding; that stretch reads KSGTNW. Positions 95 and 100 each coordinate substrate. Histidine 122 functions as the Proton acceptor in the catalytic mechanism. 3'-phosphoadenylyl sulfate-binding positions include arginine 144, serine 152, tyrosine 207, 241–246, and 271–273; these read SAFAAM and RKG. The interval 301–338 is disordered; that stretch reads VQRFPWDTSEEDSSPDGQPDPEPSPSPASDDPNPGSSQ. Residues 327–338 are compositionally biased toward low complexity; sequence PASDDPNPGSSQ.

Belongs to the sulfotransferase 1 family. As to expression, expressed at high levels in epididymis, intestine and uterus, and low levels in brain and hypothalamus. Isoform 2 is most prominent in the brain and spinal cord, with modest expression in the lung, skin and spleen. Isoform 1 is most prominently expressed in skin and small intestine, with modest expression in muscle and prostate.

It localises to the cytoplasm. The protein resides in the cytosol. It is found in the microsome. Its subcellular location is the nucleus. It catalyses the reaction an alcohol + 3'-phosphoadenylyl sulfate = an alkyl sulfate + adenosine 3',5'-bisphosphate + H(+). The enzyme catalyses pregnenolone + 3'-phosphoadenylyl sulfate = pregnenolone sulfate + adenosine 3',5'-bisphosphate + H(+). It carries out the reaction 3beta-hydroxyandrost-5-en-17-one + 3'-phosphoadenylyl sulfate = dehydroepiandrosterone 3-sulfate + adenosine 3',5'-bisphosphate + H(+). The catalysed reaction is cholesterol + 3'-phosphoadenylyl sulfate = cholesterol sulfate + adenosine 3',5'-bisphosphate + H(+). In terms of biological role, sulfotransferase that utilizes 3'-phospho-5'-adenylyl sulfate (PAPS) as sulfonate donor to catalyze the sulfate conjugation. Preferentially sulfonates cholesterol. Catalyzes sulfation of the 3beta-hydroxyl groups of steroids, such as, pregnenolone and dehydroepiandrosterone (DHEA). Cholesterol sulfation is approximately 10-fold higher than for pregnenolone and 20-fold higher than for DHEA. Plays a role in epidermal cholesterol metabolism and in the regulation of epidermal proliferation and differentiation. Functionally, strongly sulfonates pregnenolone, however is capable to sulfonate cholesterol with a high degree of efficiency. DHEA is a relatively poor substrate. In Mus musculus (Mouse), this protein is Sulfotransferase 2B1 (Sult2b1).